The chain runs to 493 residues: Xaa-Pro dipeptidase (493 aa).

An N-acetylalanine modification is found at Ala2. Ser167 is modified (phosphoserine). His255 provides a ligand contact to a dipeptide. 3 residues coordinate Mn(2+): Asp276, Asp287, and His370. Asp287 provides a ligand contact to a dipeptide. His377 and Arg398 together coordinate a dipeptide. 2 residues coordinate Mn(2+): Glu412 and Glu452.

The protein belongs to the peptidase M24B family. Eukaryotic-type prolidase subfamily. In terms of assembly, homodimer. Requires Mn(2+) as cofactor.

It carries out the reaction Xaa-L-Pro dipeptide + H2O = an L-alpha-amino acid + L-proline. Dipeptidase that catalyzes the hydrolysis of dipeptides with a prolyl (Xaa-Pro) or hydroxyprolyl residue in the C-terminal position. The preferred dipeptide substrate is Gly-Pro, but other Xaa-Pro dipeptides, such as Ala-Pro, Met-Pro, Phe-Pro, Val-Pro and Leu-Pro, can be cleaved. Plays an important role in collagen metabolism because the high level of iminoacids in collagen. This chain is Xaa-Pro dipeptidase (Pepd), found in Mus musculus (Mouse).